The chain runs to 413 residues: Aspartate aminotransferase, cytoplasmic (413 aa).

L-aspartate-binding residues include glycine 39, tryptophan 141, and asparagine 195. Lysine 259 is subject to N6-(pyridoxal phosphate)lysine. Arginine 387 is an L-aspartate binding site.

This sequence belongs to the class-I pyridoxal-phosphate-dependent aminotransferase family. In terms of assembly, homodimer. Requires pyridoxal 5'-phosphate as cofactor.

It localises to the cytoplasm. The enzyme catalyses L-aspartate + 2-oxoglutarate = oxaloacetate + L-glutamate. It carries out the reaction L-cysteine + 2-oxoglutarate = 2-oxo-3-sulfanylpropanoate + L-glutamate. It catalyses the reaction (2S)-2-aminobutanoate + 2-oxoglutarate = 2-oxobutanoate + L-glutamate. The catalysed reaction is 3-sulfino-L-alanine + 2-oxoglutarate = 3-sulfinopyruvate + L-glutamate. Functionally, biosynthesis of L-glutamate from L-aspartate or L-cysteine. Important regulator of levels of glutamate, the major excitatory neurotransmitter of the vertebrate central nervous system. Acts as a scavenger of glutamate in brain neuroprotection. The aspartate aminotransferase activity is involved in hepatic glucose synthesis during development and in adipocyte glyceroneogenesis. Using L-cysteine as substrate, regulates levels of mercaptopyruvate, an important source of hydrogen sulfide. Mercaptopyruvate is converted into H(2)S via the action of 3-mercaptopyruvate sulfurtransferase (3MST). Hydrogen sulfide is an important synaptic modulator and neuroprotectant in the brain. The protein is Aspartate aminotransferase, cytoplasmic of Bos taurus (Bovine).